A 288-amino-acid chain; its full sequence is 2-methoxy-6-polyprenyl-1,4-benzoquinol methylase, mitochondrial (288 aa).

The S-adenosyl-L-methionine site is built by Thr-68, Asp-102, and Ser-146. Low complexity predominate over residues 260 to 270 (PITPTTSSDIP). The tract at residues 260–288 (PITPTTSSDIPAQNTSEATCEVKPEPNSA) is disordered. Residues 279–288 (CEVKPEPNSA) show a composition bias toward basic and acidic residues.

It belongs to the class I-like SAM-binding methyltransferase superfamily. MenG/UbiE family. As to quaternary structure, component of a multi-subunit COQ enzyme complex.

The protein localises to the mitochondrion inner membrane. The catalysed reaction is a 2-methoxy-6-(all-trans-polyprenyl)benzene-1,4-diol + S-adenosyl-L-methionine = a 5-methoxy-2-methyl-3-(all-trans-polyprenyl)benzene-1,4-diol + S-adenosyl-L-homocysteine + H(+). The protein operates within cofactor biosynthesis; ubiquinone biosynthesis. In terms of biological role, methyltransferase required for the conversion of 2-polyprenyl-6-methoxy-1,4-benzoquinol (DDMQH2) to 2-polyprenyl-3-methyl-6-methoxy-1,4-benzoquinol (DMQH2). The protein is 2-methoxy-6-polyprenyl-1,4-benzoquinol methylase, mitochondrial of Leishmania donovani.